Consider the following 327-residue polypeptide: Polyprenyl transferase andD (327 aa).

8 consecutive transmembrane segments (helical) span residues 49-69, 81-101, 140-160, 174-194, 201-221, 244-264, 271-291, and 307-327; these read LGYI…ASIA, ITLL…WDDI, FAFV…MLFF, PQLI…GLNL, IPMA…DIIY, CLDA…VIAG, APFF…LAMA, and CCTS…VWRS.

Belongs to the UbiA prenyltransferase family. Requires Mg(2+) as cofactor.

Its subcellular location is the membrane. It functions in the pathway secondary metabolite biosynthesis; terpenoid biosynthesis. Its function is as follows. Polyprenyl transferase; part of the gene cluster that mediates the biosynthesis of anditomin, a fungal meroterpenoid. The first step of the pathway is the synthesis of 3,5-dimethylorsellinic acid (DMOA) by the polyketide synthase andM. DMOA is then converted to the phthalide compound 5,7-dihydroxy-4,6-dimethylphthalide (DHDMP) by the cytochrome P450 monooxygenase andK, which is further prenylated by the prenyltransferase andD to yield farnesyl-DHDMP. Further epoxidation by the FAD-dependent monooxygenase andE leads to epoxyfarnesyl-DHDMP. The next step involves the terpene cyclase andB that converts epoxyfarnesyl-DHDMP into preandiloid A through opening of the epoxide ring followed by the cyclization of the farnesyl moiety. Preandiloid A is in turn oxidized at the C-3 hydroxyl group to yield preandiloid B by the dehydrogenase andC. The dioxygenase andA is solely responsible for the dehydrogenation of preandiloid B leading to the enone preandiloid C, as well as for the intriguing structural rearrangement to generate the bicyclo[2.2.2]octane core, transforming preandiloid C into andiconin. FAD-binding monooxygenase andJ then produces andilesin D which is reduced by dehydrogenase andI to yield andilesin A. Action of acetyltransferase andG followed by a spontaneous acetate elimination leads then to andilesin B, which is in turn substrate of the short chain dehydrogenase andH to yield andilesin C. Finally, the dioxygenase andF catalyzes the transformation of andilesin C to anditomin. The protein is Polyprenyl transferase andD of Emericella variicolor (Aspergillus stellatus).